The chain runs to 219 residues: Ribosomal RNA small subunit methyltransferase Nep1 (219 aa).

Residues G178, G183, and 196-201 contribute to the S-adenosyl-L-methionine site; that span reads LYKAPL.

The protein belongs to the class IV-like SAM-binding methyltransferase superfamily. RNA methyltransferase NEP1 family. In terms of assembly, homodimer.

The catalysed reaction is a pseudouridine in rRNA + S-adenosyl-L-methionine = an N(1)-methylpseudouridine in rRNA + S-adenosyl-L-homocysteine + H(+). Its function is as follows. Methyltransferase involved in ribosomal biogenesis. Specifically catalyzes the N1-methylation of the pseudouridine corresponding to position 914 in M.jannaschii 16S rRNA. This Thermococcus onnurineus (strain NA1) protein is Ribosomal RNA small subunit methyltransferase Nep1.